The chain runs to 519 residues: Spermatocyte protein spe-8 (519 aa).

2 disordered regions span residues 1 to 39 (MSGVELQPESTQSEEKEEPKTAATTISSTEETKTENPNV) and 73 to 97 (NNLKKSASFDSKNQPEDSKTPKQRD). The span at 73–84 (NNLKKSASFDSK) shows a compositional bias: polar residues. Positions 85–97 (NQPEDSKTPKQRD) are enriched in basic and acidic residues. The SH2 domain maps to 119–208 (FYHGFMGRTE…PFYDNMTLIC (90 aa)). ATP is bound by residues 146–154 (VGRRVAYVI) and Lys-184. One can recognise a Protein kinase domain in the interval 209-490 (GLARHEWQLN…KEEAGMHELD (282 aa)). Asp-349 serves as the catalytic Proton acceptor.

Belongs to the protein kinase superfamily. Tyr protein kinase family. Fes/fps subfamily. As to expression, expressed in hermaphrodite larvae but not in adult. Expressed in both male larvae and adult.

The protein resides in the cell membrane. It is found in the cytoplasm. The catalysed reaction is L-tyrosyl-[protein] + ATP = O-phospho-L-tyrosyl-[protein] + ADP + H(+). Its function is as follows. Probable non-receptor tyrosine-protein kinase which plays a role in spermatid activation (spermiogenesis) in hermaphrodites. The protein is Spermatocyte protein spe-8 of Caenorhabditis briggsae.